The following is a 257-amino-acid chain: MSGFENLNTDFYQTSYSIDDQSQQSYDYGGSGGPYSKQYAGYDYSQQGRFVPPDMMQPQQPYTGQIYQPTQAYTPASPQPFYGNNFEDEPPLLEELGINFDHIWQKTLTVLHPLKVADGSIMNETDLAGPMVFCLAFGATLLLAGKIQFGYVYGISAIGCLGMFCLLNLMSMTGVSFGCVASVLGYCLLPMILLSSFAVIFSLQGMVGIILTAGIIGWCSFSASKIFISALAMEGQQLLVAYPCALLYGVFALISVF.

Over 1 to 124 (MSGFENLNTD…KVADGSIMNE (124 aa)) the chain is Cytoplasmic. Residues 75-106 (PASPQPFYGNNFEDEPPLLEELGINFDHIWQK) are interaction with Sec23. A helical transmembrane segment spans residues 125-145 (TDLAGPMVFCLAFGATLLLAG). Residue Lys146 is a topological domain, lumenal. Residues 147 to 167 (IQFGYVYGISAIGCLGMFCLL) form a helical membrane-spanning segment. Residues 168-173 (NLMSMT) lie on the Cytoplasmic side of the membrane. A helical membrane pass occupies residues 174–194 (GVSFGCVASVLGYCLLPMILL). Residues 195–196 (SS) lie on the Lumenal side of the membrane. A helical membrane pass occupies residues 197-217 (FAVIFSLQGMVGIILTAGIIG). Residues 218–236 (WCSFSASKIFISALAMEGQ) lie on the Cytoplasmic side of the membrane. Residues 237–257 (QLLVAYPCALLYGVFALISVF) traverse the membrane as a helical segment.

It belongs to the YIP1 family. In terms of assembly, interacts with the COPII coat components Sec23 (SEC23A and/or SEC23B) and Sec24 (SEC24A and/or SEC24B). Interacts with YIF1A. May interact with RAB1A. Interacts with YIPF3 and YIPF4. In terms of tissue distribution, ubiquitously expressed with abundant expression in pancreatic tissue, islets, beta cells, and brain. Highly expressed in coronary smooth muscles.

It is found in the endoplasmic reticulum membrane. The protein resides in the golgi apparatus. The protein localises to the cis-Golgi network membrane. It localises to the cytoplasmic vesicle. Its subcellular location is the COPII-coated vesicle. Its function is as follows. Plays a role in transport between endoplasmic reticulum and Golgi. In pancreatic beta cells, required to transport proinsulin from endoplasmic reticulum into the Golgi. This is Protein YIPF5 from Homo sapiens (Human).